We begin with the raw amino-acid sequence, 144 residues long: Large ribosomal subunit protein uL13 (144 aa).

It belongs to the universal ribosomal protein uL13 family. As to quaternary structure, part of the 50S ribosomal subunit.

Functionally, this protein is one of the early assembly proteins of the 50S ribosomal subunit, although it is not seen to bind rRNA by itself. It is important during the early stages of 50S assembly. In Clostridium tetani (strain Massachusetts / E88), this protein is Large ribosomal subunit protein uL13.